A 130-amino-acid chain; its full sequence is Chorion class B protein PC10 (130 aa).

Residues 1–22 are left arm; the sequence is GAWNGRLGCGCGGIAPAAELAA. Residues 23–93 form a central domain region; it reads SYGGGLGVAS…GNGALGITAE (71 aa). A right arm (Gly-rich tandem repeats) region spans residues 94 to 130; sequence RGYGAGIGYEGLGLGYGAGIGYKGYGLGGCGCGCGRL.

It belongs to the chorion protein family.

In terms of biological role, this protein is one of many from the eggshell of the silk moth. The protein is Chorion class B protein PC10 of Antheraea polyphemus (Polyphemus moth).